The chain runs to 534 residues: Lariat debranching enzyme (534 aa).

A divalent metal cation is bound by residues Cys-8, His-10, Asp-39, and Asn-84. Positions 124-154 (SGIFKGHDFLRGHHEFPPYTDSTCRSVYHVR) are lariat recognition loop. 3 residues coordinate a divalent metal cation: His-174, His-226, and His-228. 2 disordered regions span residues 242 to 275 (KLGD…PPPS) and 501 to 534 (TETP…AQED).

The protein belongs to the lariat debranching enzyme family. Fe(2+) serves as cofactor. It depends on Zn(2+) as a cofactor. The cofactor is Mn(2+).

The protein resides in the nucleus. Its activity is regulated as follows. Active in presence of diverse metals including Fe(2+), Zn(2+), Mn(2+). Binds two metal cations in two adjacent alpha and beta metal-binding pockets. In terms of biological role, cleaves the 2'-5' phosphodiester linkage at the branch point of lariat intron pre-mRNAs after splicing and converts them into linear molecules that are subsequently degraded. It thereby facilitates ribonucleotide turnover. The chain is Lariat debranching enzyme (ldbr) from Drosophila melanogaster (Fruit fly).